The primary structure comprises 346 residues: S-adenosylmethionine:tRNA ribosyltransferase-isomerase (346 aa).

Belongs to the QueA family. As to quaternary structure, monomer.

It localises to the cytoplasm. It carries out the reaction 7-aminomethyl-7-carbaguanosine(34) in tRNA + S-adenosyl-L-methionine = epoxyqueuosine(34) in tRNA + adenine + L-methionine + 2 H(+). It functions in the pathway tRNA modification; tRNA-queuosine biosynthesis. In terms of biological role, transfers and isomerizes the ribose moiety from AdoMet to the 7-aminomethyl group of 7-deazaguanine (preQ1-tRNA) to give epoxyqueuosine (oQ-tRNA). The polypeptide is S-adenosylmethionine:tRNA ribosyltransferase-isomerase (Cereibacter sphaeroides (strain KD131 / KCTC 12085) (Rhodobacter sphaeroides)).